Here is an 88-residue protein sequence, read N- to C-terminus: UPF0250 protein PM1928 (88 aa).

It belongs to the UPF0250 family.

This Pasteurella multocida (strain Pm70) protein is UPF0250 protein PM1928.